Here is a 114-residue protein sequence, read N- to C-terminus: Large ribosomal subunit protein bL20 (114 aa).

It belongs to the bacterial ribosomal protein bL20 family.

In terms of biological role, binds directly to 23S ribosomal RNA and is necessary for the in vitro assembly process of the 50S ribosomal subunit. It is not involved in the protein synthesizing functions of that subunit. This Amoebophilus asiaticus (strain 5a2) protein is Large ribosomal subunit protein bL20.